A 201-amino-acid polypeptide reads, in one-letter code: 3-isopropylmalate dehydratase small subunit (201 aa).

It belongs to the LeuD family. LeuD type 1 subfamily. Heterodimer of LeuC and LeuD.

It carries out the reaction (2R,3S)-3-isopropylmalate = (2S)-2-isopropylmalate. It participates in amino-acid biosynthesis; L-leucine biosynthesis; L-leucine from 3-methyl-2-oxobutanoate: step 2/4. Functionally, catalyzes the isomerization between 2-isopropylmalate and 3-isopropylmalate, via the formation of 2-isopropylmaleate. This Micrococcus luteus (strain ATCC 4698 / DSM 20030 / JCM 1464 / CCM 169 / CCUG 5858 / IAM 1056 / NBRC 3333 / NCIMB 9278 / NCTC 2665 / VKM Ac-2230) (Micrococcus lysodeikticus) protein is 3-isopropylmalate dehydratase small subunit.